The chain runs to 385 residues: Chorismate synthase (385 aa).

Residues Arg-40 and Arg-46 each coordinate NADP(+). FMN-binding positions include 128–130 (RAS), 248–249 (QA), Gly-293, 308–312 (KAIPS), and Arg-334.

This sequence belongs to the chorismate synthase family. As to quaternary structure, homotetramer. It depends on FMNH2 as a cofactor.

The enzyme catalyses 5-O-(1-carboxyvinyl)-3-phosphoshikimate = chorismate + phosphate. It participates in metabolic intermediate biosynthesis; chorismate biosynthesis; chorismate from D-erythrose 4-phosphate and phosphoenolpyruvate: step 7/7. Functionally, catalyzes the anti-1,4-elimination of the C-3 phosphate and the C-6 proR hydrogen from 5-enolpyruvylshikimate-3-phosphate (EPSP) to yield chorismate, which is the branch point compound that serves as the starting substrate for the three terminal pathways of aromatic amino acid biosynthesis. This reaction introduces a second double bond into the aromatic ring system. This chain is Chorismate synthase, found in Endomicrobium trichonymphae.